The chain runs to 182 residues: Peptidyl-tRNA hydrolase (182 aa).

Y14 contacts tRNA. The Proton acceptor role is filled by H19. TRNA-binding residues include F64, N66, and N112.

The protein belongs to the PTH family. In terms of assembly, monomer.

It localises to the cytoplasm. It carries out the reaction an N-acyl-L-alpha-aminoacyl-tRNA + H2O = an N-acyl-L-amino acid + a tRNA + H(+). Hydrolyzes ribosome-free peptidyl-tRNAs (with 1 or more amino acids incorporated), which drop off the ribosome during protein synthesis, or as a result of ribosome stalling. Its function is as follows. Catalyzes the release of premature peptidyl moieties from peptidyl-tRNA molecules trapped in stalled 50S ribosomal subunits, and thus maintains levels of free tRNAs and 50S ribosomes. The polypeptide is Peptidyl-tRNA hydrolase (Wolbachia sp. subsp. Drosophila simulans (strain wRi)).